The sequence spans 361 residues: Aminomethyltransferase (361 aa).

The protein belongs to the GcvT family. As to quaternary structure, the glycine cleavage system is composed of four proteins: P, T, L and H.

The enzyme catalyses N(6)-[(R)-S(8)-aminomethyldihydrolipoyl]-L-lysyl-[protein] + (6S)-5,6,7,8-tetrahydrofolate = N(6)-[(R)-dihydrolipoyl]-L-lysyl-[protein] + (6R)-5,10-methylene-5,6,7,8-tetrahydrofolate + NH4(+). In terms of biological role, the glycine cleavage system catalyzes the degradation of glycine. The chain is Aminomethyltransferase from Bacteroides fragilis (strain ATCC 25285 / DSM 2151 / CCUG 4856 / JCM 11019 / LMG 10263 / NCTC 9343 / Onslow / VPI 2553 / EN-2).